Reading from the N-terminus, the 243-residue chain is GTP cyclohydrolase 1 (243 aa).

Phosphothreonine is present on Thr-15. Residues 18 to 55 form a disordered region; the sequence is NIRPTSPYTLNPPVERDGFSWPSVGTRQRAEETEEEEK. Ser-23 bears the Phosphoserine mark. Residues Cys-132, His-135, and Cys-203 each coordinate Zn(2+).

It belongs to the GTP cyclohydrolase I family. Homodimer.

It catalyses the reaction GTP + H2O = 7,8-dihydroneopterin 3'-triphosphate + formate + H(+). Its pathway is cofactor biosynthesis; 7,8-dihydroneopterin triphosphate biosynthesis; 7,8-dihydroneopterin triphosphate from GTP: step 1/1. Functionally, GTP cyclohydrolase 1 is the first enzyme in the biosynthetic pathway leading to folic acid. The protein is GTP cyclohydrolase 1 of Saccharomyces cerevisiae (strain ATCC 204508 / S288c) (Baker's yeast).